Reading from the N-terminus, the 531-residue chain is Ultra-long-chain fatty acid omega-hydroxylase (531 aa).

The Lumenal segment spans residues 1–22 (MLPITDRLLHLLGLEKTAFRIY). Residues 23-43 (AVSTLLLFLLFFLFRLLLRFL) traverse the membrane as a helical segment. Residues 44-531 (RLCRSFYITC…LKVEPLPPRA (488 aa)) are Cytoplasmic-facing. Glutamate 335 and cysteine 475 together coordinate heme.

It belongs to the cytochrome P450 family. The cofactor is heme.

Its subcellular location is the endoplasmic reticulum membrane. The protein localises to the microsome membrane. It carries out the reaction triacontanoate + reduced [NADPH--hemoprotein reductase] + O2 = omega-hydroxy-triacontanoate + oxidized [NADPH--hemoprotein reductase] + H2O + H(+). It catalyses the reaction an omega-methyl-ultra-long-chain fatty acid + reduced [NADPH--hemoprotein reductase] + O2 = an omega-hydroxy-ultra-long-chain fatty acid + oxidized [NADPH--hemoprotein reductase] + H2O + H(+). In terms of biological role, a cytochrome P450 monooxygenase involved in epidermal ceramide biosynthesis. Hydroxylates the terminal carbon (omega-hydroxylation) of ultra-long-chain fatty acyls (C28-C36) prior to ceramide synthesis. Contributes to the synthesis of three classes of omega-hydroxy-ultra-long chain fatty acylceramides having sphingosine, 6-hydroxysphingosine and phytosphingosine bases, all major lipid components that underlie the permeability barrier of the stratum corneum. Mechanistically, uses molecular oxygen inserting one oxygen atom into a substrate, and reducing the second into a water molecule, with two electrons provided by NADPH via cytochrome P450 reductase (CPR; NADPH-ferrihemoprotein reductase). In Homo sapiens (Human), this protein is Ultra-long-chain fatty acid omega-hydroxylase.